Here is a 1262-residue protein sequence, read N- to C-terminus: DNA-directed RNA polymerase subunit beta' (1262 aa).

Zn(2+)-binding residues include cysteine 220, cysteine 294, cysteine 301, and cysteine 304.

Belongs to the RNA polymerase beta' chain family. RpoC2 subfamily. In terms of assembly, in cyanobacteria the RNAP catalytic core is composed of 2 alpha, 1 beta, 1 beta', 1 gamma and 1 omega subunit. When a sigma factor is associated with the core the holoenzyme is formed, which can initiate transcription. Requires Zn(2+) as cofactor.

It catalyses the reaction RNA(n) + a ribonucleoside 5'-triphosphate = RNA(n+1) + diphosphate. In terms of biological role, DNA-dependent RNA polymerase catalyzes the transcription of DNA into RNA using the four ribonucleoside triphosphates as substrates. The protein is DNA-directed RNA polymerase subunit beta' of Gloeobacter violaceus (strain ATCC 29082 / PCC 7421).